The following is a 186-amino-acid chain: Golgi apparatus membrane protein-like protein ECHIDNA (186 aa).

Residue Met1 is modified to N-acetylmethionine. 3 helical membrane passes run 35–55, 108–128, and 132–152; these read ILSALFFNSFVIIFVVTVLLA, FWWTLYLAAAAWFILGVFSLI, and ADYLLVVGVCLSLNVANIIGF.

Belongs to the TVP23 family. Component of a trans-Golgi network (TGN)-localized ECH/YIP4 complex made of ECH, YIP4A and YIP4B. Interacts directly with YIP4A and YIP4B.

Its subcellular location is the golgi apparatus. The protein resides in the trans-Golgi network membrane. The protein localises to the early endosome membrane. Its function is as follows. Mediates trans-Golgi-network trafficking and cell elongation. Required for keeping the appropriate balance between secretory trafficking and vacuolar targeting of a subset of proteins. The ECH/YIP4 complex is involved in the modulation of the trans-Golgi network (TGN)-mediated trafficking of some proteins and cell wall components (e.g. pectin and hemicellulose) to the cell wall in dark-grown hypocotyls and in secretory cells of the seed coat. The chain is Golgi apparatus membrane protein-like protein ECHIDNA from Arabidopsis thaliana (Mouse-ear cress).